A 580-amino-acid polypeptide reads, in one-letter code: Protein O-linked-mannose beta-1,4-N-acetylglucosaminyltransferase 2 (580 aa).

The Cytoplasmic portion of the chain corresponds to Met-1–Ser-4. The chain crosses the membrane as a helical; Signal-anchor for type II membrane protein span at residues Ala-5 to Leu-25. Topologically, residues Arg-26–Thr-580 are lumenal. Asn-99 and Asn-276 each carry an N-linked (GlcNAc...) asparagine glycan. One can recognise a Fibronectin type-III domain in the interval Ala-488 to Thr-580.

This sequence belongs to the glycosyltransferase 61 family. As to expression, highly expressed in the brain, muscle, heart, and kidney in both fetus and adult. In the brain, highest expression in the cortex and cerebellum. Highly expressed in the pancreas.

It localises to the endoplasmic reticulum membrane. The enzyme catalyses 3-O-(alpha-D-mannosyl)-L-threonyl-[protein] + UDP-N-acetyl-alpha-D-glucosamine = 3-O-(N-acetyl-beta-D-glucosaminyl-(1-&gt;4)-alpha-D-mannosyl)-L-threonyl-[protein] + UDP + H(+). It functions in the pathway protein modification; protein glycosylation. Functionally, O-linked mannose beta-1,4-N-acetylglucosaminyltransferase that transfers UDP-N-acetyl-D-glucosamine to the 4-position of the mannose to generate N-acetyl-D-glucosamine-beta-1,4-O-D-mannosylprotein. Involved in the biosynthesis of the phosphorylated O-mannosyl trisaccharide (N-acetylgalactosamine-beta-3-N-acetylglucosamine-beta-4-(phosphate-6-)mannose), a carbohydrate structure present in alpha-dystroglycan (DAG1), which is required for binding laminin G-like domain-containing extracellular proteins with high affinity. The protein is Protein O-linked-mannose beta-1,4-N-acetylglucosaminyltransferase 2 (POMGNT2) of Homo sapiens (Human).